The following is a 173-amino-acid chain: Probable DNA-directed RNA polymerase subunit delta (173 aa).

The HTH HARE-type domain occupies 14–81 (LSMIELGVKI…GSGMWGLKRW (68 aa)). The disordered stretch occupies residues 86–173 (QAEEEITEEP…EDENDDDNTR (88 aa)). Residues 109-173 (IDDVDDDLDV…EDENDDDNTR (65 aa)) show a composition bias toward acidic residues.

Belongs to the RpoE family. As to quaternary structure, RNAP is composed of a core of 2 alpha, a beta and a beta' subunits. The core is associated with a delta subunit and one of several sigma factors.

Its function is as follows. Participates in both the initiation and recycling phases of transcription. In the presence of the delta subunit, RNAP displays an increased specificity of transcription, a decreased affinity for nucleic acids, and an increased efficiency of RNA synthesis because of enhanced recycling. In Oceanobacillus iheyensis (strain DSM 14371 / CIP 107618 / JCM 11309 / KCTC 3954 / HTE831), this protein is Probable DNA-directed RNA polymerase subunit delta.